The following is a 101-amino-acid chain: Small ribosomal subunit protein uS14 (101 aa).

The protein belongs to the universal ribosomal protein uS14 family. In terms of assembly, part of the 30S ribosomal subunit. Contacts proteins S3 and S10.

Functionally, binds 16S rRNA, required for the assembly of 30S particles and may also be responsible for determining the conformation of the 16S rRNA at the A site. The sequence is that of Small ribosomal subunit protein uS14 from Shewanella loihica (strain ATCC BAA-1088 / PV-4).